A 2726-amino-acid polypeptide reads, in one-letter code: MMNNSNYSDASGLGLVDEADEMPSTEKDLAEDAPWKKIQQNTFTRWCNEHLKCVGKRLTDLQRDLSDGLRLIALLEVLSQKRMYRKFHPRPNFRQMKLENVSVALEFLEREHIKLVSIDSKAIVDGNLKLILGLIWTLILHYSISMPMWEDEDDEDARKQTPKQRLLGWIQNKVPQLPITNFNRDWQDGKALGALVDNCAPGLCPDWEAWDPNQPVQNAREAMQQADDWLGVPQVIAPEEIVDPNVDEHSVMTYLSQFPKAKLKPGAPVRSKQLNPKKAIAYGPGIEPQGNTVLQPAHFTVQTVDAGVGEVLVYIEDPEGHTEEAKVVPNNDKDRTYAVSYVPKVAGLHKVTVLFAGQNIERSPFEVNVGMALGDANKVSARGPGLEPVGNVANKPTYFDIYTAGAGTGDVAVVIVDPQGRRDTVEVALEDKGDNTFRCTYRPVMEGPHTVHVAFAGAPITRSPFPVHVAEACNPNACRASGRGLQPKGVRVKEVADFKVFTKGAGSGELKVTVKGPKGTEEPVKVREAGDGVFECEYYPVVPGKYVVTITWGGYAIPRSPFEVQVSPEAGAQKVRAWGPGLETGQVGKSADFVVEAIGTEVGTLGFSIEGPSQAKIECDDKGDGSCDVRYWPTEPGEYAVHVICDDEDIRDSPFIAHIQPAPPDCFPDKVKAFGPGLEPTGCIVDRPAEFTIDARAAGKGDLKLYAQDADGCPIDIKVIPNGDGTFRCSYVPTKPIKHTIIVSWGGVNVPKSPFRVNVGEGSHPERVKVYGPGVEKTGLKANEPTYFTVDCSEAGQGDVSIGIKCAPGVVGPVEADIDFDIIKNDNDTFTVKYTPPGAGHYTIMVLFANQEIPASPFHIKVDPSHDASKVKAEGPGLSRTGVEVGKPTHFTVLTKGAGKAKLDVHFAGAAKGEAVRDFEIIDNHDYSYTVKYTAVQQGNMAVTVTYGGDPVPKSPFVVNVAPPLDLSKVKVQGLNSKVAVGQEQAFSVNTRGAGGQGQLDVRMTSPSRRPIPCKLEPGGGAEAQAVRYMPPEEGPYKVDITYDGHPVPGSPFAVEGVLPPDPSKVCAYGPGLKGGLVGTPAPFSIDTKGAGTGGLGLTVEGPCEAKIECQDNGDGSCAVSYLPTEPGEYTINILFAEAHIPGSPFKATIQPVFDPSKVRASGPGLERGKAGEAATFTVDCSEAGEAELTIEILSDAGVKAEVLIQNNADGTYHITYSPAFPGTYTITIKYGGHPIPKFPTRVHVQPAVDTSGIKVSGPGVEPHGVLREVTTEFTVDARSLTATGGNHVTARVLNPSGAKTDTYVTDNGDGTYRVQYTAYEEGVHLVEVLYDEVAVPKSPFRVGVTEGCDPTRVRAFGPGLEGGLVNKANRFTVETRGAGTGGLGLAIEGPSEAKMSCKDNKDGSCTVEYIPFTPGDYDVNITFGGQPIPGSPFRVPVKDVVDPGKVKCSGPGLGTGVRARVPQTFTVDCSQAGRAPLQVAVLGPTGVAEPVEVRDNGDGTHTVHYTPATDGPYTVAVKYADQEVPRSPFKIKVLPSHDASKVRASGPGLNASGIPASLPVEFTIDARDAGQGLLTVQILDPEGKPKKANIRDNGDGTYTVSYLPDMSGRYTITIKYGGDEIPYSPFRIHALPTGDASKCLVTVSIGGHGLGACLGPRIQIGEETVITVDAKAAGKGKVTCTVSTPDGAELDVDVVENHDGTFDIYYTAPEPGKYVITIRFGGEHIPNSPFHVLACDPLPHVEEPAEMLQMRQPYAPLRPGTCPTHWATEEPVVPVEPLESMLRPFNLVIPFTVQKGELTGEVRMPSGKTARPNITDNKDGTITVRYAPTEKGLHQMGIKYDGNHIPGSPLQFYVDAINSRHVSAYGPGLSHGMVNKPATFTIVTKDAGEGGLSLAVEGPSKAEITCKDNKDGTCTVSYLPTAPGDYSIIVRFDDKHIPGSPFTAKITGDDSMRTSQLNVGTSTDVSLKITEGDLSQLTASIRAPSGNEEPCLLKRLPNRHIGISFTPKEVGEHVVSVRKSGKHVTNSPFKILVGPSEIGDASKVRVWGKGLSEGQTFQVAEFIVDTRNAGYGGLGLSIEGPSKVDINCEDMEDGTCKVTYCPTEPGTYIINIKFADKHVPGSPFTVKVTGEGRMKESITRRRQAPSIATIGSTCDLNLKIPGNWFQMVSAQERLTRTFTRSSHTYTRTERTEISKTRGGETKREVRVEESTQVGGDPFPAVFGDFLGRERLGSFGSITRQQEGEASSQDMTAQVTSPSGKTEAAEIVEGEDSAYSVRFVPQEMGPHTVTVKYRGQHVPGSPFQFTVGPLGEGGAHKVRAGGTGLERGVAGVPAEFSIWTREAGAGGLSIAVEGPSKAEIAFEDRKDGSCGVSYVVQEPGDYEVSIKFNDEHIPDSPFVVPVASLSDDARRLTVTSLQETGLKVNQPASFAVQLNGARGVIDARVHTPSGAVEECYVSELDSDKHTIRFIPHENGVHSIDVKFNGAHIPGSPFKIRVGEQSQAGDPGLVSAYGPGLEGGTTGVSSEFIVNTQNAGSGALSVTIDGPSKVQLDCRECPEGHVVTYTPMAPGNYLIAIKYGGPQHIVGSPFKAKVTGPRLSGGHSLHETSTVLVETVTKSSSSRGASYSSIPKFSSDASKVVTRGPGLSQAFVGQKNSFTVDCSKAGTNMMMVGVHGPKTPCEEVYVKHMGNRVYNVTYTVKEKGDYILIVKWGDESVPGSPFKVNVP.

Positions 1–260 are actin-binding; that stretch reads MMNNSNYSDA…VMTYLSQFPK (260 aa). Ser5 bears the Phosphoserine mark. Calponin-homology (CH) domains follow at residues 37–143 and 160–263; these read KIQQ…LHYS and QTPK…KAKL. Filamin repeat units lie at residues 271 to 369, 371 to 469, 470 to 566, 567 to 659, 663 to 759, 760 to 862, 863 to 961, 962 to 1057, 1058 to 1150, 1151 to 1245, 1246 to 1345, 1346 to 1438, 1439 to 1534, 1535 to 1631, and 1636 to 1735; these read SKQL…EVNV, MALG…PVHV, AEAC…EVQV, SPEA…IAHI, PPDC…RVNV, GEGS…HIKV, DPSH…VVNV, APPL…AVEG, VLPP…KATI, QPVF…RVHV, QPAV…RVGV, TEGC…RVPV, KDVV…KIKV, LPSH…RIHA, and DASK…HVLA. At Arg1003 the chain carries Omega-N-methylarginine. A phosphoserine mark is found at Ser1162 and Ser1339. A hinge 1 region spans residues 1736–1759; sequence CDPLPHVEEPAEMLQMRQPYAPLR. Filamin repeat units follow at residues 1760-1855, 1856-1947, 1948-2034, and 2037-2129; these read PGTC…QFYV, DAIN…TAKI, TGDD…KILV, and SEIG…TVKV. The residue at position 2043 (Ser2043) is a Phosphoserine. An intradomain insert; mediate targeting to Z lines region spans residues 2163-2244; sequence GNWFQMVSAQ…FGSITRQQEG (82 aa). Residues 2193–2210 show a composition bias toward basic and acidic residues; sequence EISKTRGGETKREVRVEE. Residues 2193 to 2214 are disordered; that stretch reads EISKTRGGETKREVRVEESTQV. A Filamin 20; mediates interaction with XIRP1 repeat occupies 2212 to 2307; sequence TQVGGDPFPA…VPGSPFQFTV (96 aa). Ser2234 and Ser2237 each carry phosphoserine. The residue at position 2239 (Thr2239) is a Phosphothreonine. A compositionally biased stretch (polar residues) spans 2241-2260; sequence QQEGEASSQDMTAQVTSPSG. Residues 2241 to 2261 form a disordered region; it reads QQEGEASSQDMTAQVTSPSGK. 3 Filamin repeats span residues 2310–2402, 2404–2497, and 2501–2593; these read LGEG…VVPV, SLSD…KIRV, and SQAG…KAKV. The tract at residues 2404 to 2725 is interaction with INPPL1; sequence SLSDDARRLT…VPGSPFKVNV (322 aa). Residues Ser2587, Ser2618, Ser2621, Ser2633, Ser2715, and Ser2719 each carry the phosphoserine modification. The tract at residues 2594–2630 is hinge 2; it reads TGPRLSGGHSLHETSTVLVETVTKSSSSRGASYSSIP. The segment at 2594–2726 is self-association site, tail; sequence TGPRLSGGHS…PGSPFKVNVP (133 aa). One copy of the Filamin 24 repeat lies at 2631 to 2725; sequence KFSSDASKVV…VPGSPFKVNV (95 aa).

This sequence belongs to the filamin family. As to quaternary structure, homodimer; the filamin repeat 24 and the second hinge domain are important for dimer formation. Interacts with FLNB, INPPL1, ITGB1A, KCND2, MYOT, MYOZ1 and MYOZ3. Interacts with sarcoglycans SGCD and SGCG. Interacts (via filament repeats 17-18, 20-21 and 24) with USP25 (isoform USP25m only). Interacts with FBLIM1. Interacts with XIRP1; this interaction is mediated by filamin 20 repeat. Interacts with KY. Interacts with IGFN1. Interacts with MICALL2. Interacts with ANK3. Interacts with MICALL2. Interacts with ANK3. Interacts with SYNPO2. In terms of processing, ubiquitinated by FBXL22, leading to proteasomal degradation.

It localises to the cytoplasm. It is found in the membrane. Its subcellular location is the cytoskeleton. The protein resides in the myofibril. The protein localises to the sarcomere. It localises to the z line. Functionally, muscle-specific filamin, which plays a central role in sarcomere assembly and organization. Critical for normal myogenesis, it probably functions as a large actin-cross-linking protein with structural functions at the Z lines in muscle cells. May be involved in reorganizing the actin cytoskeleton in response to signaling events. This is Filamin-C (Flnc) from Mus musculus (Mouse).